The following is a 121-amino-acid chain: Small ribosomal subunit protein uS13 (121 aa).

The interval 91 to 121 (HRRGLPTRGQNTKNNARTRKGPVKTVANKKK) is disordered. Basic residues predominate over residues 106 to 121 (ARTRKGPVKTVANKKK).

Belongs to the universal ribosomal protein uS13 family. In terms of assembly, part of the 30S ribosomal subunit. Forms a loose heterodimer with protein S19. Forms two bridges to the 50S subunit in the 70S ribosome.

In terms of biological role, located at the top of the head of the 30S subunit, it contacts several helices of the 16S rRNA. In the 70S ribosome it contacts the 23S rRNA (bridge B1a) and protein L5 of the 50S subunit (bridge B1b), connecting the 2 subunits; these bridges are implicated in subunit movement. Contacts the tRNAs in the A and P-sites. This Macrococcus caseolyticus (strain JCSC5402) (Macrococcoides caseolyticum) protein is Small ribosomal subunit protein uS13.